The following is a 360-amino-acid chain: DNA polymerase IV (360 aa).

The UmuC domain occupies 8 to 189; the sequence is IIHVDMDCFF…LPLEKIPGVG (182 aa). Asp-12 and Asp-107 together coordinate Mg(2+). Glu-108 is an active-site residue.

Belongs to the DNA polymerase type-Y family. In terms of assembly, monomer. It depends on Mg(2+) as a cofactor.

Its subcellular location is the cytoplasm. It carries out the reaction DNA(n) + a 2'-deoxyribonucleoside 5'-triphosphate = DNA(n+1) + diphosphate. Its function is as follows. Poorly processive, error-prone DNA polymerase involved in untargeted mutagenesis. Copies undamaged DNA at stalled replication forks, which arise in vivo from mismatched or misaligned primer ends. These misaligned primers can be extended by PolIV. Exhibits no 3'-5' exonuclease (proofreading) activity. May be involved in translesional synthesis, in conjunction with the beta clamp from PolIII. This Vibrio cholerae serotype O1 (strain ATCC 39541 / Classical Ogawa 395 / O395) protein is DNA polymerase IV.